A 91-amino-acid chain; its full sequence is UPF0335 protein BBta_6866 (91 aa).

This sequence belongs to the UPF0335 family.

This Bradyrhizobium sp. (strain BTAi1 / ATCC BAA-1182) protein is UPF0335 protein BBta_6866.